The chain runs to 212 residues: Tubulin alpha chain (212 aa).

Residues N3 and N25 each contribute to the GTP site. E51 is an active-site residue.

The protein belongs to the tubulin family. Dimer of alpha and beta chains. A typical microtubule is a hollow water-filled tube with an outer diameter of 25 nm and an inner diameter of 15 nM. Alpha-beta heterodimers associate head-to-tail to form protofilaments running lengthwise along the microtubule wall with the beta-tubulin subunit facing the microtubule plus end conferring a structural polarity. Microtubules usually have 13 protofilaments but different protofilament numbers can be found in some organisms and specialized cells. It depends on Mg(2+) as a cofactor.

It localises to the cytoplasm. It is found in the cytoskeleton. The enzyme catalyses GTP + H2O = GDP + phosphate + H(+). Functionally, tubulin is the major constituent of microtubules, a cylinder consisting of laterally associated linear protofilaments composed of alpha- and beta-tubulin heterodimers. Microtubules grow by the addition of GTP-tubulin dimers to the microtubule end, where a stabilizing cap forms. Below the cap, tubulin dimers are in GDP-bound state, owing to GTPase activity of alpha-tubulin. The polypeptide is Tubulin alpha chain (TUB-A) (Pneumocystis carinii).